The primary structure comprises 445 residues: Tubulin beta-7 chain (445 aa).

Residues glutamine 11, glutamate 69, serine 138, glycine 142, threonine 143, glycine 144, asparagine 204, and asparagine 226 each contribute to the GTP site. Glutamate 69 serves as a coordination point for Mg(2+). The tract at residues 421–445 (EYQQYQDATAEDEEYEEEEEEEEET) is disordered. Acidic residues predominate over residues 429–445 (TAEDEEYEEEEEEEEET).

This sequence belongs to the tubulin family. As to quaternary structure, dimer of alpha and beta chains. A typical microtubule is a hollow water-filled tube with an outer diameter of 25 nm and an inner diameter of 15 nM. Alpha-beta heterodimers associate head-to-tail to form protofilaments running lengthwise along the microtubule wall with the beta-tubulin subunit facing the microtubule plus end conferring a structural polarity. Microtubules usually have 13 protofilaments but different protofilament numbers can be found in some organisms and specialized cells. Mg(2+) serves as cofactor.

Its subcellular location is the cytoplasm. It is found in the cytoskeleton. Its function is as follows. Tubulin is the major constituent of microtubules, a cylinder consisting of laterally associated linear protofilaments composed of alpha- and beta-tubulin heterodimers. Microtubules grow by the addition of GTP-tubulin dimers to the microtubule end, where a stabilizing cap forms. Below the cap, tubulin dimers are in GDP-bound state, owing to GTPase activity of alpha-tubulin. In Zea mays (Maize), this protein is Tubulin beta-7 chain (TUBB7).